Reading from the N-terminus, the 188-residue chain is HTH-type transcriptional repressor AcnR (188 aa).

The region spanning 10 to 70 is the HTH tetR-type domain; sequence VNSRQEILEG…ALAREDAARM (61 aa). A DNA-binding region (H-T-H motif) is located at residues 33–52; sequence TVRRLEEATGKSRGAIFHHF. Residues 79 to 80, arginine 130, and asparagine 134 each bind citrate; that span reads LV. Glutamate 181 provides a ligand contact to Mg(2+). Position 185 (arginine 185) interacts with citrate.

Homodimer.

AcnR negatively controls the expression of the aconitase gene acn. This Corynebacterium efficiens (strain DSM 44549 / YS-314 / AJ 12310 / JCM 11189 / NBRC 100395) protein is HTH-type transcriptional repressor AcnR.